A 351-amino-acid polypeptide reads, in one-letter code: UDP-N-acetylenolpyruvoylglucosamine reductase (351 aa).

Residues 25 to 196 (HIQAQARWLL…AAVEFRLPLL (172 aa)) enclose the FAD-binding PCMH-type domain. Arg173 is a catalytic residue. Ser246 (proton donor) is an active-site residue. Glu343 is an active-site residue.

This sequence belongs to the MurB family. It depends on FAD as a cofactor.

The protein resides in the cytoplasm. It catalyses the reaction UDP-N-acetyl-alpha-D-muramate + NADP(+) = UDP-N-acetyl-3-O-(1-carboxyvinyl)-alpha-D-glucosamine + NADPH + H(+). It functions in the pathway cell wall biogenesis; peptidoglycan biosynthesis. Its function is as follows. Cell wall formation. In Xylella fastidiosa (strain 9a5c), this protein is UDP-N-acetylenolpyruvoylglucosamine reductase.